A 78-amino-acid chain; its full sequence is D-alanyl carrier protein (78 aa).

The Carrier domain maps to 1–78 (MEFRDQVLDL…KIVAVLEELR (78 aa)). At S36 the chain carries O-(pantetheine 4'-phosphoryl)serine.

It belongs to the DltC family. 4'-phosphopantetheine is transferred from CoA to a specific serine of apo-DCP.

It localises to the cytoplasm. Its pathway is cell wall biogenesis; lipoteichoic acid biosynthesis. In terms of biological role, carrier protein involved in the D-alanylation of lipoteichoic acid (LTA). The loading of thioester-linked D-alanine onto DltC is catalyzed by D-alanine--D-alanyl carrier protein ligase DltA. The DltC-carried D-alanyl group is further transferred to cell membrane phosphatidylglycerol (PG) by forming an ester bond, probably catalyzed by DltD. D-alanylation of LTA plays an important role in modulating the properties of the cell wall in Gram-positive bacteria, influencing the net charge of the cell wall. The protein is D-alanyl carrier protein of Staphylococcus saprophyticus subsp. saprophyticus (strain ATCC 15305 / DSM 20229 / NCIMB 8711 / NCTC 7292 / S-41).